The following is a 735-amino-acid chain: MLKLFSAFRKDKIWDFDGGIHPPEMKSQSNGTPLRQVPLAPRFVIPLKQHIGAEGELCVSVGDRVLRGQALTRGRGRMLPVHAPTSGTVIAIAPHSTAHPSALAELSVIIDADGEDRWIEREGWSDYRAHSREALIERIHQYGVAGLGGAGFPTGVKLQGGGDKITTLIINAAECEPYITADDRLMQDCAAQIVEGIRILAHILQPREVLIGIEDNKPQAISMLRAVLADAHDISLRVIPTKYPSGGAKQLTQILTGKQVPHGGRSSDIGVLMQNVGTAYAVKRAVIDGEPITERVVTLTGEAVSRPGNVWARLGTPVRHLLNDAGFCPSADQMVIMGGPLMGFTLPWLDVPVVKITNCLLAPSVTEMGAPQEEKSCIRCSACADACPADLLPQQLYWFSKGQQHDKATAHHIADCIECGACAWVCPSNIPLVQYFRQEKAEINAIRLEEKRAAEAKARFEARQARLEREKAARLARHKSAAVQPAAKDQDAIAAALARVKEKQAQATQPVVIQAGSLPDNSAVIAAREARKAQARAKQAAHPVADSAISGGDPRKAAVEAAIARAKARKQEQQAGSEPAEPVDPRKAAVEAAIARAKVRKQEQQAGSEPAEPVDPRKAAVEAAIARAKARKHEQQAGSEPAEPADPRKAAVEAAIARAKARKQEQQAGSEPAEPVDPRKAAVEAAIARAKARKQEQQAGSEPAEPADPRKAAVAAAIARVQAKKAAQQQVVNED.

4Fe-4S ferredoxin-type domains follow at residues 368–397 and 407–436; these read MGAP…QQLY and KATA…VQYF. Positions 377, 380, 383, 387, 416, 419, 422, and 426 each coordinate [4Fe-4S] cluster. The tract at residues 562 to 713 is disordered; sequence AIARAKARKQ…AEPADPRKAA (152 aa).

This sequence belongs to the 4Fe4S bacterial-type ferredoxin family. RnfC subfamily. As to quaternary structure, the complex is composed of six subunits: RsxA, RsxB, RsxC, RsxD, RsxE and RsxG. The cofactor is [4Fe-4S] cluster.

Its subcellular location is the cell inner membrane. Its function is as follows. Part of a membrane-bound complex that couples electron transfer with translocation of ions across the membrane. Required to maintain the reduced state of SoxR. This is Ion-translocating oxidoreductase complex subunit C from Salmonella newport (strain SL254).